We begin with the raw amino-acid sequence, 354 residues long: Uroporphyrinogen decarboxylase (354 aa).

Residues R25 to R29, D75, Y152, T207, and H330 each bind substrate.

Belongs to the uroporphyrinogen decarboxylase family. In terms of assembly, homodimer.

It localises to the cytoplasm. The enzyme catalyses uroporphyrinogen III + 4 H(+) = coproporphyrinogen III + 4 CO2. It functions in the pathway porphyrin-containing compound metabolism; protoporphyrin-IX biosynthesis; coproporphyrinogen-III from 5-aminolevulinate: step 4/4. Its function is as follows. Catalyzes the decarboxylation of four acetate groups of uroporphyrinogen-III to yield coproporphyrinogen-III. The polypeptide is Uroporphyrinogen decarboxylase (Xanthomonas campestris pv. campestris (strain 8004)).